A 401-amino-acid chain; its full sequence is Na(+)/H(+) antiporter NhaA 2 (401 aa).

The next 11 helical transmembrane spans lie at 13 to 33 (AAGG…ANSP), 59 to 79 (LLLW…GLEV), 94 to 114 (ITLP…IYVW), 125 to 145 (GWAI…TIFG), 154 to 174 (LFLL…IALF), 178 to 198 (DLST…FLLN), 209 to 229 (VLIG…ATLA), 260 to 280 (WVGF…SLFG), 292 to 312 (LGIA…VCWI), 332 to 352 (GVSL…SLAF), and 363 to 383 (VKAG…VLLA).

This sequence belongs to the NhaA Na(+)/H(+) (TC 2.A.33) antiporter family.

It is found in the cell inner membrane. It carries out the reaction Na(+)(in) + 2 H(+)(out) = Na(+)(out) + 2 H(+)(in). Na(+)/H(+) antiporter that extrudes sodium in exchange for external protons. The protein is Na(+)/H(+) antiporter NhaA 2 of Pseudoalteromonas atlantica (strain T6c / ATCC BAA-1087).